Consider the following 502-residue polypeptide: ATP synthase subunit alpha (502 aa).

169–176 (GDRQTGKT) is an ATP binding site.

It belongs to the ATPase alpha/beta chains family. F-type ATPases have 2 components, CF(1) - the catalytic core - and CF(0) - the membrane proton channel. CF(1) has five subunits: alpha(3), beta(3), gamma(1), delta(1), epsilon(1). CF(0) has three main subunits: a(1), b(2) and c(9-12). The alpha and beta chains form an alternating ring which encloses part of the gamma chain. CF(1) is attached to CF(0) by a central stalk formed by the gamma and epsilon chains, while a peripheral stalk is formed by the delta and b chains.

It localises to the cell membrane. The catalysed reaction is ATP + H2O + 4 H(+)(in) = ADP + phosphate + 5 H(+)(out). Produces ATP from ADP in the presence of a proton gradient across the membrane. The alpha chain is a regulatory subunit. In Clostridium perfringens (strain ATCC 13124 / DSM 756 / JCM 1290 / NCIMB 6125 / NCTC 8237 / Type A), this protein is ATP synthase subunit alpha.